The following is a 608-amino-acid chain: Aspartate--tRNA(Asp/Asn) ligase (608 aa).

Glu179 is a binding site for L-aspartate. The segment at 203–206 is aspartate; the sequence is QLFK. Arg225 lines the L-aspartate pocket. ATP-binding positions include 225–227 and Gln234; that span reads RDE. His461 serves as a coordination point for L-aspartate. Residue Glu494 coordinates ATP. Arg501 contacts L-aspartate. 546–549 serves as a coordination point for ATP; sequence GLDR.

This sequence belongs to the class-II aminoacyl-tRNA synthetase family. Type 1 subfamily. As to quaternary structure, homodimer.

It is found in the cytoplasm. The catalysed reaction is tRNA(Asx) + L-aspartate + ATP = L-aspartyl-tRNA(Asx) + AMP + diphosphate. Its function is as follows. Aspartyl-tRNA synthetase with relaxed tRNA specificity since it is able to aspartylate not only its cognate tRNA(Asp) but also tRNA(Asn). Reaction proceeds in two steps: L-aspartate is first activated by ATP to form Asp-AMP and then transferred to the acceptor end of tRNA(Asp/Asn). This Psychrobacter arcticus (strain DSM 17307 / VKM B-2377 / 273-4) protein is Aspartate--tRNA(Asp/Asn) ligase.